The following is an 85-amino-acid chain: UPF0335 protein BH15140 (85 aa).

The protein belongs to the UPF0335 family.

This chain is UPF0335 protein BH15140, found in Bartonella henselae (strain ATCC 49882 / DSM 28221 / CCUG 30454 / Houston 1) (Rochalimaea henselae).